Consider the following 77-residue polypeptide: Membrane-associated ATPase epsilon chain (77 aa).

The protein to E.hirae NtpH. In terms of assembly, sul-ATPase is composed of six (or maybe five) subunits: alpha, beta, delta, gamma, C (proteolipid), and possibly epsilon.

The enzyme catalyses ATP + H2O + 4 H(+)(in) = ADP + phosphate + 5 H(+)(out). This is Membrane-associated ATPase epsilon chain (atpE) from Sulfolobus acidocaldarius (strain ATCC 33909 / DSM 639 / JCM 8929 / NBRC 15157 / NCIMB 11770).